The chain runs to 429 residues: Glutamate-1-semialdehyde 2,1-aminomutase (429 aa).

An N6-(pyridoxal phosphate)lysine modification is found at lysine 265.

The protein belongs to the class-III pyridoxal-phosphate-dependent aminotransferase family. HemL subfamily. Homodimer. Requires pyridoxal 5'-phosphate as cofactor.

The protein localises to the cytoplasm. The catalysed reaction is (S)-4-amino-5-oxopentanoate = 5-aminolevulinate. It functions in the pathway porphyrin-containing compound metabolism; protoporphyrin-IX biosynthesis; 5-aminolevulinate from L-glutamyl-tRNA(Glu): step 2/2. The chain is Glutamate-1-semialdehyde 2,1-aminomutase from Shewanella pealeana (strain ATCC 700345 / ANG-SQ1).